We begin with the raw amino-acid sequence, 495 residues long: Glutamyl-tRNA(Gln) amidotransferase subunit A (495 aa).

Catalysis depends on charge relay system residues Lys-78 and Ser-158. Ser-182 serves as the catalytic Acyl-ester intermediate.

Belongs to the amidase family. GatA subfamily. Heterotrimer of A, B and C subunits.

The catalysed reaction is L-glutamyl-tRNA(Gln) + L-glutamine + ATP + H2O = L-glutaminyl-tRNA(Gln) + L-glutamate + ADP + phosphate + H(+). In terms of biological role, allows the formation of correctly charged Gln-tRNA(Gln) through the transamidation of misacylated Glu-tRNA(Gln) in organisms which lack glutaminyl-tRNA synthetase. The reaction takes place in the presence of glutamine and ATP through an activated gamma-phospho-Glu-tRNA(Gln). The chain is Glutamyl-tRNA(Gln) amidotransferase subunit A from Ruegeria sp. (strain TM1040) (Silicibacter sp.).